Consider the following 520-residue polypeptide: GMP synthase [glutamine-hydrolyzing] (520 aa).

The region spanning 9 to 202 (TILIIDFGSQ…VHRIVGVKPG (194 aa)) is the Glutamine amidotransferase type-1 domain. Catalysis depends on Cys86, which acts as the Nucleophile. Active-site residues include His176 and Glu178. The GMPS ATP-PPase domain occupies 203–395 (WTMGAYREQA…LGLPDSFIGR (193 aa)). Residue 230-236 (SGGVDSS) participates in ATP binding.

In terms of assembly, homodimer.

It carries out the reaction XMP + L-glutamine + ATP + H2O = GMP + L-glutamate + AMP + diphosphate + 2 H(+). It participates in purine metabolism; GMP biosynthesis; GMP from XMP (L-Gln route): step 1/1. Functionally, catalyzes the synthesis of GMP from XMP. This Brucella canis (strain ATCC 23365 / NCTC 10854 / RM-666) protein is GMP synthase [glutamine-hydrolyzing].